The following is a 123-amino-acid chain: MPTIQQLIRNPREPKRTRTKTPALKACPQRRGVCTRVYTTTPKKPNSALRKVAKVRMTSGFESLCYIPGEGHNLQEHSVVLIRGGRVKDLPGVRYHIVRGALDTQPVKNRKQRRSHYGAKKPK.

The disordered stretch occupies residues 1 to 28 (MPTIQQLIRNPREPKRTRTKTPALKACP). Position 89 is a 3-methylthioaspartic acid (Asp89). A disordered region spans residues 104-123 (TQPVKNRKQRRSHYGAKKPK). Residues 108 to 123 (KNRKQRRSHYGAKKPK) show a composition bias toward basic residues.

Belongs to the universal ribosomal protein uS12 family. As to quaternary structure, part of the 30S ribosomal subunit. Contacts proteins S8 and S17. May interact with IF1 in the 30S initiation complex.

Functionally, with S4 and S5 plays an important role in translational accuracy. Interacts with and stabilizes bases of the 16S rRNA that are involved in tRNA selection in the A site and with the mRNA backbone. Located at the interface of the 30S and 50S subunits, it traverses the body of the 30S subunit contacting proteins on the other side and probably holding the rRNA structure together. The combined cluster of proteins S8, S12 and S17 appears to hold together the shoulder and platform of the 30S subunit. This is Small ribosomal subunit protein uS12 from Hyphomonas neptunium (strain ATCC 15444).